Consider the following 938-residue polypeptide: Bifunctional glutamine synthetase adenylyltransferase/adenylyl-removing enzyme (938 aa).

The interval 1-457 (MLEADAARLK…HFDHVFGDPS (457 aa)) is adenylyl removase. The adenylyl transferase stretch occupies residues 460 to 938 (AHTLDSMWAA…ALWTIVFGSA (479 aa)).

Belongs to the GlnE family. Mg(2+) serves as cofactor.

The catalysed reaction is [glutamine synthetase]-O(4)-(5'-adenylyl)-L-tyrosine + phosphate = [glutamine synthetase]-L-tyrosine + ADP. It carries out the reaction [glutamine synthetase]-L-tyrosine + ATP = [glutamine synthetase]-O(4)-(5'-adenylyl)-L-tyrosine + diphosphate. In terms of biological role, involved in the regulation of glutamine synthetase GlnA, a key enzyme in the process to assimilate ammonia. When cellular nitrogen levels are high, the C-terminal adenylyl transferase (AT) inactivates GlnA by covalent transfer of an adenylyl group from ATP to specific tyrosine residue of GlnA, thus reducing its activity. Conversely, when nitrogen levels are low, the N-terminal adenylyl removase (AR) activates GlnA by removing the adenylyl group by phosphorolysis, increasing its activity. The regulatory region of GlnE binds the signal transduction protein PII (GlnB) which indicates the nitrogen status of the cell. In Aromatoleum aromaticum (strain DSM 19018 / LMG 30748 / EbN1) (Azoarcus sp. (strain EbN1)), this protein is Bifunctional glutamine synthetase adenylyltransferase/adenylyl-removing enzyme.